Consider the following 441-residue polypeptide: UDP-N-acetylmuramoylalanine--D-glutamate ligase (441 aa).

112–118 (GTNGKTT) provides a ligand contact to ATP.

This sequence belongs to the MurCDEF family.

The protein resides in the cytoplasm. It carries out the reaction UDP-N-acetyl-alpha-D-muramoyl-L-alanine + D-glutamate + ATP = UDP-N-acetyl-alpha-D-muramoyl-L-alanyl-D-glutamate + ADP + phosphate + H(+). Its pathway is cell wall biogenesis; peptidoglycan biosynthesis. In terms of biological role, cell wall formation. Catalyzes the addition of glutamate to the nucleotide precursor UDP-N-acetylmuramoyl-L-alanine (UMA). The protein is UDP-N-acetylmuramoylalanine--D-glutamate ligase of Gloeobacter violaceus (strain ATCC 29082 / PCC 7421).